Reading from the N-terminus, the 1187-residue chain is MDVDSEEKRHRTRSKGVRVPVEPAIQELFSCPTPGCDGSGHVSGKYARHRSVYGCPLAKKRKTQDKQPQEPAPKRKPFAVKADSSSVDECYESDGTEDMDDKEEDDDEEFSEDNDEQGDDDDEDEVDREDEEEIEEEDDEEDDDDEDGDDVEEEEEDDDEEEEEEEEEEENEDHQMSCTRIMQDTDKDDNNNDEYDNYDELVAKSLLNLGKIAEDAAYRARTESEMNSNTSNSLEDDSDKNENLGRKSELSLDLDSDVVRETVDSLKLLAQGHGVVLSENISDRSYAEGMSQQDSRNMNYVMLGKPMNNGLMEKMVEESDEEVCLSSLECLRNQCFDLARKLSETNPQDRSQPPNMSVRQHVRQEDDFPGRTPDRSYSDMMNLMRLEEQLSPRSRTFSSCAKEDGCHERDDDTTSVNSDRSEEVFDMTKGNLTLLEKAIALETERAKAMREKMAMDAGRRDNLRSYEDQSPRQLAGEDRKSKSSDSHVKKPYYGKDPSRTEKRESKCPTPGCDGTGHVTGLYPHHRSLSGCPHKDRVPPEILAMHENVLKCPTPGCTGRGHVNSNRNSHRSLSGCPIAAAEKLAKAQEKHQSCDVSKSNQASDRVLRPMCFVKQLEIPQYGYRNNVPTTTPRSNLAKELEKYSKTSFEYNSYDNHTYGKRAIAPKVQTRDISPKGYDDAKRYCKNASPSSSTTSSYAPSSSSNLSCGGGSSASSTCSKSSFDYTHDMEAAHMAATAILNLSTRCREMPQNLSTKPQDLCTARNPDMEVDENGTLDLSMNKQRPRDSCCPVLTPLEPMSPQQQAVMSSRCFQLSEGDCWDLPVDYTKMKPRRVDEDEPKEITPEDLDPFQEALEERRYPGEVTIPSPKPKYPQCKESKKDLITLSGCPLADKSIRSMLATSSQELKCPTPGCDGSGHITGNYASHRSLSGCPRAKKSGIRIAQSKEDKEDQEPIRCPVPGCDGQGHITGKYASHRSASGCPLAAKRQKDGYLNGSQFSWKSVKTEGMSCPTPGCDGSGHVSGSFLTHRSLSGCPRATSAMKKAKLSGEQMLTIKQRASNGIENDEEIKQLDEEIKELNESNSQMEADMIKLRTQITTMESNLKTIEEENKVIEQQNESLLHELANLSQSLIHSLANIQLPHMDPINEQNFDAYVTTLTEMYTNQDRYQSPENKALLENIKQAVRGIQV.

A disordered region spans residues Met-1–Glu-22. The segment at Glu-22–Asp-65 adopts a CCHHC-type 1 zinc-finger fold. Residues Cys-31, Cys-36, His-49, and Cys-55 each contribute to the Zn(2+) site. Disordered stretches follow at residues Pro-56–Cys-178 and Arg-221–Ser-248. Positions Glu-89–Glu-172 are enriched in acidic residues. Residue Ser-251 is modified to Phosphoserine. 2 disordered regions span residues Ser-343–Glu-422 and Arg-450–Gly-514. Over residues Glu-344–Val-358 the composition is skewed to polar residues. Basic and acidic residues-rich tracts occupy residues Val-362–Tyr-377, Ala-401–Asp-412, Arg-450–Val-488, and Asp-496–Lys-506. 2 consecutive CCHHC-type zinc fingers follow at residues Ser-498–Ile-541 and Leu-542–Lys-585. Residues Cys-507, Cys-512, His-525, Cys-531, Cys-551, Cys-556, His-569, and Cys-575 each contribute to the Zn(2+) site. Positions Ala-686 to Ser-710 are disordered. 3 consecutive CCHHC-type zinc fingers follow at residues Leu-897–Ile-940, Asp-946–Gly-989, and Lys-999–Ala-1042. Positions 906, 911, 924, 930, 955, 960, 973, 979, 1008, 1013, 1026, and 1032 each coordinate Zn(2+). The stretch at Asn-1058–Ser-1132 forms a coiled coil.

This sequence belongs to the MYT1 family. As to quaternary structure, interacts with SIN3B. As to expression, brain.

Its subcellular location is the nucleus. It localises to the chromosome. Transcription factor that plays a key role in neuronal differentiation by specifically repressing expression of non-neuronal genes during neuron differentiation. In contrast to other transcription repressors that inhibit specific lineages, mediates repression of multiple differentiation programs. Also represses expression of negative regulators of neurogenesis, such as members of the Notch signaling pathway, including HES1. The combination of three transcription factors, ASCL1, POU3F2/BRN2 and MYT1L, is sufficient to reprogram fibroblasts and other somatic cells into induced neuronal (iN) cells in vitro. Directly binds the 5'-AAGTT-3' core motif present on the promoter of target genes and represses transcription by recruiting a multiprotein complex containing SIN3B. The 5'-AAGTT-3' core motif is absent from the promoter of neural genes. This Mus musculus (Mouse) protein is Myelin transcription factor 1-like protein.